Here is a 995-residue protein sequence, read N- to C-terminus: MLDEHILKEMKLSFQLTEQRELASGRRKPEKPQHPPAVPKKKVISKVASNPAKISETMIQKAQMESPKKSKKNKTAGAKRPLSNNVSNPDSSPSQKRLKKDNTLPKKNPVNKSSNVAAKKSAATSKSAKLPIPKVHSINELAPKKTKVKTPNKTKEASLSKKHKVNGNKSSMKVVQNGKVVEIIGTAAETSDIEMNSLDDWSEEDDYLIESDSENDVVEEIDETFLKDPKIFKVKCKGPEYKLSDILPPFEHDEYQPLLLDGDGSGTVRKIKVFKSAQEETDSDEDDIDYEPEDSDDFGSEEFDSEESDSEDTSSADYDSDGDFYSEYSDMEDVSDSDSEEFGSDIFDTDDLDSTYEPPDIEGFFDHPPVGMQREPLIIEEIFDDPPVEKKQERIEQSSVMDIVVKNLSSVPPKKESEVAIETEENDEVSLPEVVTPEKENYLQPSDVPFYRNPQANPTELSVFENSLKSNHVLAVIKEDLEVYGTLVLTLLCGQISVNGYRARRQEAITIYSPKGLNWVSISPTKTKKPVKDEVNWEELNKNFTRAQLDRIKTSFQRQTNAIVLLHRNTSAQQLVDTFGKHMAQNVFPLVNSSNRPFGQSETLLHCLIQSSDQSRTLQVPQVWNKLQMHATSRIIVAGGKGVGKSSLLRYLINRNLGQFPSMLLIDLDIGQPEIFVPQTISCTVIDEPLLGPGFLYNRQPEHAIVVGHTNIVLCAEQYARAVIQLVQNIQNDAKYSNIPWLINTMGYNKGFGIELMALLVDRIRPTDLVQIASPIPINNFDSVLDRNSLSQIKPIIYSAEEFKINEIPKYTLHKLISAVPAREKGTWSLSAKDMRYSNLLARLSSCLTGNAKSLTDCQPLGVSLESLKILHPTSKNYSREELIRGMEANVVYLCHHGAGLPQCLGIGVVRAIDYERKELYLVPAMPLQKMSLVDCLILGGEQSLPQGFLRDQGQGVSSSVPFVFILDDSKSSKSIQQIYHRAPAFLGVPANQRN.

Disordered regions lie at residues 18 to 173 and 271 to 359; these read EQRE…SSMK and IKVF…YEPP. Low complexity-rich tracts occupy residues 75–94 and 110–129; these read TAGA…SSPS and VNKS…KSAK. The segment covering 279–354 has biased composition (acidic residues); it reads EETDSDEDDI…DIFDTDDLDS (76 aa). 639-646 provides a ligand contact to ATP; the sequence is GGKGVGKS.

The protein belongs to the Clp1 family. NOL9/GRC3 subfamily.

It localises to the nucleus. The protein localises to the nucleolus. Polynucleotide 5'-kinase involved in rRNA processing. This Drosophila melanogaster (Fruit fly) protein is Polynucleotide 5'-hydroxyl-kinase NOL9.